Consider the following 159-residue polypeptide: Putative ribosomal RNA large subunit methyltransferase H (159 aa).

Residues Leu76, Gly108, and 127–132 contribute to the S-adenosyl-L-methionine site; that span reads FSKMTF.

The protein belongs to the RNA methyltransferase RlmH family.

The protein resides in the cytoplasm. It carries out the reaction pseudouridine(1915) in 23S rRNA + S-adenosyl-L-methionine = N(3)-methylpseudouridine(1915) in 23S rRNA + S-adenosyl-L-homocysteine + H(+). Its function is as follows. Specifically methylates the pseudouridine at position 1915 (m3Psi1915) in 23S rRNA. The sequence is that of Putative ribosomal RNA large subunit methyltransferase H from Methanococcus maripaludis (strain DSM 14266 / JCM 13030 / NBRC 101832 / S2 / LL).